The following is a 142-amino-acid chain: 3-hydroxyacyl-[acyl-carrier-protein] dehydratase FabZ (142 aa).

H48 is a catalytic residue.

The protein belongs to the thioester dehydratase family. FabZ subfamily.

The protein localises to the cytoplasm. It catalyses the reaction a (3R)-hydroxyacyl-[ACP] = a (2E)-enoyl-[ACP] + H2O. In terms of biological role, involved in unsaturated fatty acids biosynthesis. Catalyzes the dehydration of short chain beta-hydroxyacyl-ACPs and long chain saturated and unsaturated beta-hydroxyacyl-ACPs. The protein is 3-hydroxyacyl-[acyl-carrier-protein] dehydratase FabZ of Clostridioides difficile (strain 630) (Peptoclostridium difficile).